Consider the following 268-residue polypeptide: Tryptophan synthase alpha chain (268 aa).

Residues E49 and D60 each act as proton acceptor in the active site.

It belongs to the TrpA family. Tetramer of two alpha and two beta chains.

It carries out the reaction (1S,2R)-1-C-(indol-3-yl)glycerol 3-phosphate + L-serine = D-glyceraldehyde 3-phosphate + L-tryptophan + H2O. Its pathway is amino-acid biosynthesis; L-tryptophan biosynthesis; L-tryptophan from chorismate: step 5/5. Its function is as follows. The alpha subunit is responsible for the aldol cleavage of indoleglycerol phosphate to indole and glyceraldehyde 3-phosphate. This chain is Tryptophan synthase alpha chain, found in Escherichia coli O139:H28 (strain E24377A / ETEC).